A 242-amino-acid polypeptide reads, in one-letter code: Pyridoxine 5'-phosphate synthase (242 aa).

A 3-amino-2-oxopropyl phosphate-binding site is contributed by N7. D9–H10 is a 1-deoxy-D-xylulose 5-phosphate binding site. A 3-amino-2-oxopropyl phosphate-binding site is contributed by R18. H43 (proton acceptor) is an active-site residue. R45 and H50 together coordinate 1-deoxy-D-xylulose 5-phosphate. E70 (proton acceptor) is an active-site residue. 1-deoxy-D-xylulose 5-phosphate is bound at residue T100. H191 functions as the Proton donor in the catalytic mechanism. 3-amino-2-oxopropyl phosphate-binding positions include G192 and G213–H214.

This sequence belongs to the PNP synthase family. Homooctamer; tetramer of dimers.

It is found in the cytoplasm. It catalyses the reaction 3-amino-2-oxopropyl phosphate + 1-deoxy-D-xylulose 5-phosphate = pyridoxine 5'-phosphate + phosphate + 2 H2O + H(+). The protein operates within cofactor biosynthesis; pyridoxine 5'-phosphate biosynthesis; pyridoxine 5'-phosphate from D-erythrose 4-phosphate: step 5/5. Catalyzes the complicated ring closure reaction between the two acyclic compounds 1-deoxy-D-xylulose-5-phosphate (DXP) and 3-amino-2-oxopropyl phosphate (1-amino-acetone-3-phosphate or AAP) to form pyridoxine 5'-phosphate (PNP) and inorganic phosphate. The sequence is that of Pyridoxine 5'-phosphate synthase from Chromobacterium violaceum (strain ATCC 12472 / DSM 30191 / JCM 1249 / CCUG 213 / NBRC 12614 / NCIMB 9131 / NCTC 9757 / MK).